We begin with the raw amino-acid sequence, 70 residues long: Protein SlyX homolog (70 aa).

Residues 51 to 70 (RMREAEANRPGPTNEPPPHY) form a disordered region.

It belongs to the SlyX family.

The chain is Protein SlyX homolog from Nitrobacter hamburgensis (strain DSM 10229 / NCIMB 13809 / X14).